The sequence spans 375 residues: Alanine racemase (375 aa).

Lysine 45 (proton acceptor; specific for D-alanine) is an active-site residue. The residue at position 45 (lysine 45) is an N6-(pyridoxal phosphate)lysine. Arginine 141 is a binding site for substrate. Tyrosine 270 (proton acceptor; specific for L-alanine) is an active-site residue. Methionine 318 contacts substrate.

It belongs to the alanine racemase family. The cofactor is pyridoxal 5'-phosphate.

The enzyme catalyses L-alanine = D-alanine. It participates in amino-acid biosynthesis; D-alanine biosynthesis; D-alanine from L-alanine: step 1/1. Functionally, catalyzes the interconversion of L-alanine and D-alanine. May also act on other amino acids. In Pseudoalteromonas atlantica (strain T6c / ATCC BAA-1087), this protein is Alanine racemase (alr).